A 332-amino-acid chain; its full sequence is Ubiquinol oxidase 1a, mitochondrial (332 aa).

The N-terminal 54 residues, 1–54, are a transit peptide targeting the mitochondrion; sequence MSSRMAGSAILRHVGGVRLFTASATSPAAAAAAAARPFLAGGEAVPGVWGLRLM. Residues 157-177 traverse the membrane as a helical segment; the sequence is AMMLETVAAVPGMVGGMLLHL. Residues glutamate 161, glutamate 200, and histidine 203 each coordinate Fe cation. A helical membrane pass occupies residues 219 to 239; it reads ALVITVQGVFFNAYFLGYLLS. Positions 251, 302, and 305 each coordinate Fe cation.

It belongs to the alternative oxidase family. In terms of assembly, homodimer; disulfide-linked. The cofactor is Fe cation. Expressed in roots, leaf sheaths and leaf blades.

Its subcellular location is the mitochondrion inner membrane. It carries out the reaction 2 a ubiquinol + O2 = 2 a ubiquinone + 2 H2O. Its function is as follows. Catalyzes the cyanide-resistant oxidation of ubiquinol and the reduction of molecular oxygen to water, but does not translocate protons and consequently is not linked to oxidative phosphorylation. May increase respiration when the cytochrome respiratory pathway is restricted, or in response to low temperatures. The polypeptide is Ubiquinol oxidase 1a, mitochondrial (Oryza sativa subsp. japonica (Rice)).